The sequence spans 312 residues: HPr kinase/phosphorylase (312 aa).

Catalysis depends on residues H139 and K160. ATP is bound at residue 154–161; that stretch reads GSSGVGKS. S161 contributes to the Mg(2+) binding site. The Proton acceptor; for phosphorylation activity. Proton donor; for dephosphorylation activity role is filled by D178. The important for the catalytic mechanism of both phosphorylation and dephosphorylation stretch occupies residues 202 to 211; the sequence is LEIRGLGIIN. E203 contributes to the Mg(2+) binding site. R244 is an active-site residue. The tract at residues 265–270 is important for the catalytic mechanism of dephosphorylation; the sequence is PVRPGR.

It belongs to the HPrK/P family. Homohexamer. The cofactor is Mg(2+).

The catalysed reaction is [HPr protein]-L-serine + ATP = [HPr protein]-O-phospho-L-serine + ADP + H(+). It carries out the reaction [HPr protein]-O-phospho-L-serine + phosphate + H(+) = [HPr protein]-L-serine + diphosphate. Its function is as follows. Catalyzes the ATP- as well as the pyrophosphate-dependent phosphorylation of a specific serine residue in HPr, a phosphocarrier protein of the phosphoenolpyruvate-dependent sugar phosphotransferase system (PTS). HprK/P also catalyzes the pyrophosphate-producing, inorganic phosphate-dependent dephosphorylation (phosphorolysis) of seryl-phosphorylated HPr (P-Ser-HPr). The two antagonistic activities of HprK/P are regulated by several intracellular metabolites, which change their concentration in response to the absence or presence of rapidly metabolisable carbon sources (glucose, fructose, etc.) in the growth medium. Therefore, by controlling the phosphorylation state of HPr, HPrK/P is a sensor enzyme that plays a major role in the regulation of carbon metabolism and sugar transport: it mediates carbon catabolite repression (CCR), and regulates PTS-catalyzed carbohydrate uptake and inducer exclusion. The chain is HPr kinase/phosphorylase from Listeria innocua serovar 6a (strain ATCC BAA-680 / CLIP 11262).